The sequence spans 388 residues: Alcohol dehydrogenase-like 1 (388 aa).

Positions 53, 55, 76, 106, 109, 112, 120, and 185 each coordinate Zn(2+). Thr-55 and His-76 together coordinate an alcohol. Thr-55 lines the NAD(+) pocket. NAD(+) is bound by residues 210–215 (GLGAVG), Asp-234, Lys-239, 304–306 (LGM), Phe-331, and Arg-381.

It belongs to the zinc-containing alcohol dehydrogenase family. Class-III subfamily. Homodimer. Requires Zn(2+) as cofactor.

Its subcellular location is the cytoplasm. It catalyses the reaction a primary alcohol + NAD(+) = an aldehyde + NADH + H(+). It carries out the reaction a secondary alcohol + NAD(+) = a ketone + NADH + H(+). The protein is Alcohol dehydrogenase-like 1 of Arabidopsis thaliana (Mouse-ear cress).